A 556-amino-acid polypeptide reads, in one-letter code: Phenylalanine--tRNA ligase beta subunit (556 aa).

The B5 domain occupies 278–353; that stretch reads LTPKRFEVEL…IAYGYNNIEP (76 aa). Mg(2+)-binding residues include Asp-331, Asp-337, Glu-340, and Asp-341.

It belongs to the phenylalanyl-tRNA synthetase beta subunit family. Type 2 subfamily. Tetramer of two alpha and two beta subunits. It depends on Mg(2+) as a cofactor.

The protein resides in the cytoplasm. The enzyme catalyses tRNA(Phe) + L-phenylalanine + ATP = L-phenylalanyl-tRNA(Phe) + AMP + diphosphate + H(+). The chain is Phenylalanine--tRNA ligase beta subunit from Pyrococcus abyssi (strain GE5 / Orsay).